We begin with the raw amino-acid sequence, 186 residues long: Tegument protein UL55 (186 aa).

Belongs to the alphaherpesvirinae HHV-1 UL55 family.

The protein localises to the virion tegument. Its subcellular location is the host nucleus matrix. This Human herpesvirus 2 (strain HG52) (HHV-2) protein is Tegument protein UL55.